The primary structure comprises 204 residues: N-(5'-phosphoribosyl)anthranilate isomerase (204 aa).

The protein belongs to the TrpF family.

The catalysed reaction is N-(5-phospho-beta-D-ribosyl)anthranilate = 1-(2-carboxyphenylamino)-1-deoxy-D-ribulose 5-phosphate. The protein operates within amino-acid biosynthesis; L-tryptophan biosynthesis; L-tryptophan from chorismate: step 3/5. The polypeptide is N-(5'-phosphoribosyl)anthranilate isomerase (Bacillus cereus (strain AH187)).